A 216-amino-acid chain; its full sequence is Ras-like protein rasW (216 aa).

16-23 (GDGGVGKT) serves as a coordination point for GTP. Positions 38–46 (YDPTIEDSY) match the Effector region motif. GTP contacts are provided by residues 63–67 (DTAGQ) and 122–125 (NKID). The interval 171–193 (KRKEDPQSHKPSKDSDSKKPLVN) is disordered. The span at 172–189 (RKEDPQSHKPSKDSDSKK) shows a compositional bias: basic and acidic residues. C213 is modified (cysteine methyl ester). The S-geranylgeranyl cysteine moiety is linked to residue C213. Positions 214-216 (KMM) are cleaved as a propeptide — removed in mature form.

This sequence belongs to the small GTPase superfamily. Ras family.

Its subcellular location is the cell membrane. The catalysed reaction is GTP + H2O = GDP + phosphate + H(+). Ras proteins bind GDP/GTP and possess intrinsic GTPase activity. This Dictyostelium discoideum (Social amoeba) protein is Ras-like protein rasW (rasW).